Consider the following 406-residue polypeptide: Tubby-like F-box protein 11 (406 aa).

The F-box domain maps to 53–108 (SCWTQLPPELLREVLARVEESEGWWPRRRDVVACAGVCRSWRGIVREIVRTPEASG).

It belongs to the TUB family. In terms of tissue distribution, ubiquitous.

The chain is Tubby-like F-box protein 11 (TULP11) from Oryza sativa subsp. japonica (Rice).